A 280-amino-acid chain; its full sequence is Succinate dehydrogenase [ubiquinone] iron-sulfur subunit 2, mitochondrial (280 aa).

A mitochondrion-targeting transit peptide spans M1–W28. The region spanning F51–M140 is the 2Fe-2S ferredoxin-type domain. The [2Fe-2S] cluster site is built by C101, C106, and C121. The 31-residue stretch at D183–Y213 folds into the 4Fe-4S ferredoxin-type domain. The [4Fe-4S] cluster site is built by C193, C196, and C199. C203 is a [3Fe-4S] cluster binding site. W208 serves as a coordination point for a ubiquinone. [3Fe-4S] cluster contacts are provided by C250 and C256. [4Fe-4S] cluster is bound at residue C260.

This sequence belongs to the succinate dehydrogenase/fumarate reductase iron-sulfur protein family. In terms of assembly, component of complex II composed of eight subunits in plants: four classical SDH subunits SDH1, SDH2, SDH3 and SDH4 (a flavoprotein (FP), an iron-sulfur protein (IP), and a cytochrome b composed of a large and a small subunit.), as well as four subunits unknown in mitochondria from bacteria and heterotrophic eukaryotes. It depends on [2Fe-2S] cluster as a cofactor. [3Fe-4S] cluster is required as a cofactor. The cofactor is [4Fe-4S] cluster. In terms of tissue distribution, ubiquitous. Preferentially expressed in flowers, inflorescences and root tips.

The protein resides in the mitochondrion inner membrane. It carries out the reaction a quinone + succinate = fumarate + a quinol. Its pathway is carbohydrate metabolism; tricarboxylic acid cycle; fumarate from succinate (eukaryal route): step 1/1. Functionally, iron-sulfur protein (IP) subunit of succinate dehydrogenase (SDH) that is involved in complex II of the mitochondrial electron transport chain and is responsible for transferring electrons from succinate to ubiquinone (coenzyme Q). The protein is Succinate dehydrogenase [ubiquinone] iron-sulfur subunit 2, mitochondrial (SDH2-2) of Arabidopsis thaliana (Mouse-ear cress).